The chain runs to 685 residues: RING finger protein 145 (685 aa).

13 helical membrane passes run 53 to 73 (YIAL…LTLP), 77 to 97 (LVQL…HQLS), 123 to 143 (FTTA…VMQT), 151 to 171 (AHLL…IVFI), 174 to 194 (FAMI…LLVP), 225 to 245 (LVLP…QIYT), 275 to 295 (YSLL…LTLC), 316 to 336 (TEGI…LQVI), 340 to 360 (FLLS…MLEI), 384 to 404 (SLCL…CQFF), 410 to 430 (LLII…TLLI), 460 to 480 (LLEF…TLFG), and 482 to 502 (WTVM…WLRA). The segment at 537–575 (CSICFQDMKSAVITPCSHFFHAACLKKWLYVQETCPLCH) adopts an RING-type; atypical zinc-finger fold. The tract at residues 582–685 (LQPTSSPGTP…VSTSDVNCAS (104 aa)) is disordered. Residues 583–602 (QPTSSPGTPTQGTPAANQNP) are compositionally biased toward low complexity. The span at 620-631 (EGIRAEEMKTSA) shows a compositional bias: basic and acidic residues.

The protein localises to the membrane. This Danio rerio (Zebrafish) protein is RING finger protein 145 (rnf145).